The sequence spans 75 residues: Small ribosomal subunit protein bS18 (75 aa).

This sequence belongs to the bacterial ribosomal protein bS18 family. Part of the 30S ribosomal subunit. Forms a tight heterodimer with protein bS6.

In terms of biological role, binds as a heterodimer with protein bS6 to the central domain of the 16S rRNA, where it helps stabilize the platform of the 30S subunit. The sequence is that of Small ribosomal subunit protein bS18 from Buchnera aphidicola subsp. Acyrthosiphon pisum (strain 5A).